The chain runs to 369 residues: Cyclin-I2 (369 aa).

Residues methionine 1–aspartate 116 form a disordered region. 2 stretches are compositionally biased toward low complexity: residues alanine 64–valine 76 and alanine 83–proline 101.

Belongs to the cyclin family.

The sequence is that of Cyclin-I2 (CCNI2) from Homo sapiens (Human).